The sequence spans 85 residues: uncharacterized protein (85 aa).

At serine 22 the chain carries Phosphoserine.

It localises to the cytoplasm. The protein resides in the nucleus. This is an uncharacterized protein from Saccharomyces cerevisiae (strain ATCC 204508 / S288c) (Baker's yeast).